The sequence spans 61 residues: Small ribosomal subunit protein uS14 (61 aa).

Residues cysteine 24, cysteine 27, cysteine 40, and cysteine 43 each contribute to the Zn(2+) site.

Belongs to the universal ribosomal protein uS14 family. Zinc-binding uS14 subfamily. As to quaternary structure, part of the 30S ribosomal subunit. Contacts proteins S3 and S10. The cofactor is Zn(2+).

Its function is as follows. Binds 16S rRNA, required for the assembly of 30S particles and may also be responsible for determining the conformation of the 16S rRNA at the A site. The chain is Small ribosomal subunit protein uS14 from Mycobacterium leprae (strain Br4923).